A 291-amino-acid polypeptide reads, in one-letter code: Foldase protein PrsA 2 (291 aa).

The N-terminal stretch at 1–20 (MKKKLILGLVMMMALFSLAA) is a signal peptide. Cys21 carries N-palmitoyl cysteine lipidation. Residue Cys21 is the site of S-diacylglycerol cysteine attachment. The PpiC domain maps to 135–226 (QPDITVSHIL…YGYHIIQMDK (92 aa)).

Belongs to the PrsA family.

Its subcellular location is the cell membrane. The catalysed reaction is [protein]-peptidylproline (omega=180) = [protein]-peptidylproline (omega=0). Its function is as follows. Plays a major role in protein secretion by helping the post-translocational extracellular folding of several secreted proteins. The protein is Foldase protein PrsA 2 (prsA2) of Listeria innocua serovar 6a (strain ATCC BAA-680 / CLIP 11262).